The primary structure comprises 406 residues: Leu/Ile/Val-binding protein homolog 5 (406 aa).

The first 29 residues, 1-29, serve as a signal peptide directing secretion; that stretch reads MIGTRLPAWTRVLACGVAGLSLMTISAKA.

The protein belongs to the leucine-binding protein family.

Component of an amino-acid transport system. This chain is Leu/Ile/Val-binding protein homolog 5, found in Brucella abortus (strain 2308).